The sequence spans 152 residues: 6,7-dimethyl-8-ribityllumazine synthase (152 aa).

5-amino-6-(D-ribitylamino)uracil is bound by residues Phe21, 55–57, and 79–81; these read AFE and CVI. 84-85 provides a ligand contact to (2S)-2-hydroxy-3-oxobutyl phosphate; the sequence is AT. His87 (proton donor) is an active-site residue. Phe112 contacts 5-amino-6-(D-ribitylamino)uracil. Residue Arg126 coordinates (2S)-2-hydroxy-3-oxobutyl phosphate.

It belongs to the DMRL synthase family. In terms of assembly, forms an icosahedral capsid composed of 60 subunits, arranged as a dodecamer of pentamers.

It carries out the reaction (2S)-2-hydroxy-3-oxobutyl phosphate + 5-amino-6-(D-ribitylamino)uracil = 6,7-dimethyl-8-(1-D-ribityl)lumazine + phosphate + 2 H2O + H(+). The protein operates within cofactor biosynthesis; riboflavin biosynthesis; riboflavin from 2-hydroxy-3-oxobutyl phosphate and 5-amino-6-(D-ribitylamino)uracil: step 1/2. Functionally, catalyzes the formation of 6,7-dimethyl-8-ribityllumazine by condensation of 5-amino-6-(D-ribitylamino)uracil with 3,4-dihydroxy-2-butanone 4-phosphate. This is the penultimate step in the biosynthesis of riboflavin. The polypeptide is 6,7-dimethyl-8-ribityllumazine synthase (Staphylococcus haemolyticus (strain JCSC1435)).